We begin with the raw amino-acid sequence, 26 residues long: L-amino-acid oxidase (26 aa).

Belongs to the flavin monoamine oxidase family. Monomer. Requires FAD as cofactor. Post-translationally, not glycosylated. As to expression, expressed by the ink gland.

The protein resides in the secreted. It carries out the reaction an L-alpha-amino acid + O2 + H2O = a 2-oxocarboxylate + H2O2 + NH4(+). Its function is as follows. Catalyzes the oxidative deamination of positively charged L-amino acids L-Lys and L-Arg but not of amino acids L-His, L-Asp or L-Glu. Has antibacterial activity against the Gram-positive bacterium S.aureus (MIC=15 ug/ml). This antibacterial activity is bacteriostatic in the absence of amino acids L-Lys or L-Arg but bactericidal in their presence. The antibacterial effect is largely dependent on H(2)O(2) produced in the oxidative deamination of substrates. Has hemagglutinating activity towards rabbit erythrocytes. Hemagglutinating activity is inhibited by the glycoprotein fetuin, but not by glucose, mannose, galactose, N-acetylglucosamine, N-acetylgalactosamine or sialic acid. This chain is L-amino-acid oxidase, found in Aplysia dactylomela (Spotted sea hare).